Consider the following 397-residue polypeptide: Enoyl-[acyl-carrier-protein] reductase [NADH] (397 aa).

NAD(+) contacts are provided by residues 48–53, 74–75, 111–112, and 139–140; these read GASTGY, FE, DA, and AA. Tyr225 is a binding site for substrate. The active-site Proton donor is the Tyr235. NAD(+)-binding positions include Lys244 and 273–275; that span reads VVT.

It belongs to the TER reductase family. As to quaternary structure, monomer.

It carries out the reaction a 2,3-saturated acyl-[ACP] + NAD(+) = a (2E)-enoyl-[ACP] + NADH + H(+). It participates in lipid metabolism; fatty acid biosynthesis. In terms of biological role, involved in the final reduction of the elongation cycle of fatty acid synthesis (FAS II). Catalyzes the reduction of a carbon-carbon double bond in an enoyl moiety that is covalently linked to an acyl carrier protein (ACP). In Burkholderia pseudomallei (strain 1710b), this protein is Enoyl-[acyl-carrier-protein] reductase [NADH].